A 272-amino-acid polypeptide reads, in one-letter code: DNA repair protein RecO (272 aa).

Belongs to the RecO family.

Functionally, involved in DNA repair and RecF pathway recombination. In Limosilactobacillus fermentum (strain NBRC 3956 / LMG 18251) (Lactobacillus fermentum), this protein is DNA repair protein RecO.